The chain runs to 276 residues: MALVKTKPTSPGRRSMVKVVNKDLHKGAPHAPLLEKQFQKSGRNNNGHITTRHKGGGHKHHYRVVDFKRNDKDGIAAKVERLEYDPNRSANIALVLFADGERRYIIATKGMVAGQALLNGAEAPIKAGNNLPIRNIPVGTTINNVEILPGKGAQVARAAGGSAVLLAREGLYAQVRLRSGEVRRVHIECRATIGEVGNEEHSLRVIGKAGATRWRGIRPTVRGVVMNPVDHPHGGGEGKTAAGRDPVSPWGTPAKGYRTRSNKRTDSMIVQKRHKR.

Disordered regions lie at residues glutamine 37–lysine 59 and valine 225–arginine 276. Positions glutamine 39 to isoleucine 49 are enriched in polar residues. A compositionally biased stretch (basic residues) spans threonine 50–lysine 59.

It belongs to the universal ribosomal protein uL2 family. Part of the 50S ribosomal subunit. Forms a bridge to the 30S subunit in the 70S ribosome.

In terms of biological role, one of the primary rRNA binding proteins. Required for association of the 30S and 50S subunits to form the 70S ribosome, for tRNA binding and peptide bond formation. It has been suggested to have peptidyltransferase activity; this is somewhat controversial. Makes several contacts with the 16S rRNA in the 70S ribosome. The polypeptide is Large ribosomal subunit protein uL2 (Cupriavidus pinatubonensis (strain JMP 134 / LMG 1197) (Cupriavidus necator (strain JMP 134))).